We begin with the raw amino-acid sequence, 558 residues long: Formate--tetrahydrofolate ligase (558 aa).

Residue 66–73 (TPAGEGKT) participates in ATP binding.

It belongs to the formate--tetrahydrofolate ligase family.

The enzyme catalyses (6S)-5,6,7,8-tetrahydrofolate + formate + ATP = (6R)-10-formyltetrahydrofolate + ADP + phosphate. Its pathway is one-carbon metabolism; tetrahydrofolate interconversion. This chain is Formate--tetrahydrofolate ligase, found in Neisseria meningitidis serogroup A / serotype 4A (strain DSM 15465 / Z2491).